The primary structure comprises 461 residues: Argininosuccinate lyase (461 aa).

It belongs to the lyase 1 family. Argininosuccinate lyase subfamily.

It is found in the cytoplasm. The enzyme catalyses 2-(N(omega)-L-arginino)succinate = fumarate + L-arginine. It functions in the pathway amino-acid biosynthesis; L-arginine biosynthesis; L-arginine from L-ornithine and carbamoyl phosphate: step 3/3. In Nitrosomonas europaea (strain ATCC 19718 / CIP 103999 / KCTC 2705 / NBRC 14298), this protein is Argininosuccinate lyase.